A 607-amino-acid chain; its full sequence is MLSYQDKVGAFYKDNARANSSKLSLVTEEQGGRRPPYLLFVLLILLVGIMALLAITGVRFHQVSTSNMEFSRLLKEDMEKSEAVHHQVIDVLTPLFKIIGDEVGLRLPQKLNEIKQFILQKTNFFNPNREFDFRDLHWCINPPSKIKVNFTNYCDTIGIRKSIASAANPILLSAHTGGRGDIFPPYRCSGATTSVGRVFPLSVSLSMSLISRTSEIINMLTAISDGVYGKTYLLVPDYIEGEFDTQKIRVFEIGFIKRWLNDMPLLQTTNYMVLPENSKAKVCTIAVGELTLASLCVDESTILLYHDSNGSQDGILVVTLGIFGATPMDQVEEVIPVAHPSVEKIHITNHRGFIKDSIATWMVPALVSEKQEEQKSCLESACQRKSYPMCNQTSWEPFGGGQLPSYGRLTLPLDPSIDLQLNISFTYGPVILNGNGMDYYESPLLGSGWLTIPPKNGTVLGLINKAGRGDQFTVIPHVLTFAPRESSGNCYLPIQTSQIMDKDVLTESNLVVLPTQNFRYVIATYDISRGDHAIVYYVYDPIRTISYTHPFRLTTKGRPDFLRIECFVWDDDLWCHQFYRFETDSTNSTTSVENLVRIRFSCSRSKP.

Topologically, residues 1–37 (MLSYQDKVGAFYKDNARANSSKLSLVTEEQGGRRPPY) are intravirion. The chain crosses the membrane as a helical span at residues 38-58 (LLFVLLILLVGIMALLAITGV). Over 59–607 (RFHQVSTSNM…IRFSCSRSKP (549 aa)) the chain is Virion surface. 6 N-linked (GlcNAc...) asparagine; by host glycosylation sites follow: N149, N309, N391, N422, N456, and N587.

This sequence belongs to the paramyxoviruses hemagglutinin-neuraminidase family. Non-sialidase subfamily. As to quaternary structure, binds canine SLAMF1 at the cell surface.

It is found in the virion membrane. Its subcellular location is the host cell membrane. Functionally, attaches the virus to cell receptors and thereby initiating infection. Binding of H protein to the receptor induces a conformational change that allows the F protein to trigger virion/cell membranes fusion. The cellular receptor might be SLAM, and may explain the lymphotropism of the virus. The chain is Hemagglutinin glycoprotein (H) from Canine distemper virus (strain A92-6) (CDV).